Reading from the N-terminus, the 222-residue chain is Recombination protein RecR (222 aa).

The C4-type zinc-finger motif lies at cysteine 57 to cysteine 72. The 94-residue stretch at serine 80 to proline 173 folds into the Toprim domain. The disordered stretch occupies residues alanine 189 to histidine 222.

It belongs to the RecR family.

Functionally, may play a role in DNA repair. It seems to be involved in an RecBC-independent recombinational process of DNA repair. It may act with RecF and RecO. The sequence is that of Recombination protein RecR from Deinococcus geothermalis (strain DSM 11300 / CIP 105573 / AG-3a).